Consider the following 68-residue polypeptide: Negative regulator of P-body association (68 aa).

Residues 1-68 (MGDQPCASGR…LKSHPPPPEK (68 aa)) are disordered.

As to quaternary structure, interacts with mRNA decapping proteins DCP1A, DCP2 and EDC4.

Its subcellular location is the cytoplasm. It localises to the P-body. Functionally, promotes dispersal of P-body components and is likely to play a role in the mRNA decapping process. In Homo sapiens (Human), this protein is Negative regulator of P-body association.